Reading from the N-terminus, the 75-residue chain is Large ribosomal subunit protein bL31 (75 aa).

The protein belongs to the bacterial ribosomal protein bL31 family. Type A subfamily. Part of the 50S ribosomal subunit.

Its function is as follows. Binds the 23S rRNA. The polypeptide is Large ribosomal subunit protein bL31 (Gluconobacter oxydans (strain 621H) (Gluconobacter suboxydans)).